Reading from the N-terminus, the 161-residue chain is Phosphopantetheine adenylyltransferase (161 aa).

Substrate is bound at residue serine 11. ATP contacts are provided by residues 11–12 (SF) and histidine 19. Residues lysine 43, leucine 75, and arginine 89 each coordinate substrate. ATP is bound by residues 90-92 (GLR), glutamate 100, and 125-131 (YSYLSSS).

The protein belongs to the bacterial CoaD family. Homohexamer. Mg(2+) serves as cofactor.

It localises to the cytoplasm. The catalysed reaction is (R)-4'-phosphopantetheine + ATP + H(+) = 3'-dephospho-CoA + diphosphate. The protein operates within cofactor biosynthesis; coenzyme A biosynthesis; CoA from (R)-pantothenate: step 4/5. In terms of biological role, reversibly transfers an adenylyl group from ATP to 4'-phosphopantetheine, yielding dephospho-CoA (dPCoA) and pyrophosphate. The chain is Phosphopantetheine adenylyltransferase from Geobacter sp. (strain M21).